A 165-amino-acid chain; its full sequence is Protein SprT (165 aa).

One can recognise a SprT-like domain in the interval 22 to 163 (LAQANLKLDR…RCVHCGEPLV (142 aa)). His-78 contributes to the Zn(2+) binding site. Residue Glu-79 is part of the active site. His-82 contributes to the Zn(2+) binding site.

It belongs to the SprT family. The cofactor is Zn(2+).

It localises to the cytoplasm. The polypeptide is Protein SprT (Salmonella agona (strain SL483)).